A 170-amino-acid polypeptide reads, in one-letter code: Small ribosomal subunit protein uS13 (170 aa).

Over residues 128–140 (VRHKRGQKVRGQR) the composition is skewed to basic residues. Positions 128–170 (VRHKRGQKVRGQRTKSTGRTEGTIGVNVEAIKEEQAEDGGDEE) are disordered.

It belongs to the universal ribosomal protein uS13 family. Part of the 30S ribosomal subunit. Forms a loose heterodimer with protein S19. Forms two bridges to the 50S subunit in the 70S ribosome.

Its function is as follows. Located at the top of the head of the 30S subunit, it contacts several helices of the 16S rRNA. In the 70S ribosome it contacts the 23S rRNA (bridge B1a) and protein L5 of the 50S subunit (bridge B1b), connecting the 2 subunits; these bridges are implicated in subunit movement. The polypeptide is Small ribosomal subunit protein uS13 (Natronomonas pharaonis (strain ATCC 35678 / DSM 2160 / CIP 103997 / JCM 8858 / NBRC 14720 / NCIMB 2260 / Gabara) (Halobacterium pharaonis)).